Here is a 588-residue protein sequence, read N- to C-terminus: Putative calcium-binding mitochondrial carrier F55A11.4 (588 aa).

The segment covering 1–14 (MINKNEQTESTSGA) has biased composition (polar residues). The disordered stretch occupies residues 1–25 (MINKNEQTESTSGAAEQKEDDEEQY). 4 consecutive EF-hand domains span residues 73–108 (EKERQIRDIYDRLDIDNDGTIDIRDLTLALKHETPH), 109–139 (IPANLAPVIMSKMSPDDEGRVDFYSFSSYVL), 140–175 (ENEQKLAEMFADMDRNHDGLVDVVEMKNYCKDIGVP), and 176–211 (LDDHKAQHIVNKMDQTGSASVDLKEFQEFMMLYPSS). Ca(2+) contacts are provided by Asp86, Asp88, Asp90, Thr92, and Asp97. Asp153, Asn155, Asp157, and Glu164 together coordinate Ca(2+). 3 Solcar repeats span residues 246 to 332 (GIWW…LKRL), 342 to 428 (ISTF…LKRT), and 440 to 529 (PGVL…VRTG). A run of 6 helical transmembrane segments spans residues 252–269 (LVAGGAAGAVSRTCTAPF), 307–326 (GNGINVIKIAPESAIKFMCY), 352–365 (SAAGAISQSTIYPM), 403–422 (GYLPNLIGIIPYAGIDLAIY), 446–463 (LACGTCSSTCGQLSSYPF), and 504–523 (GITPNFLKVIPAVSISYVVY).

This sequence belongs to the mitochondrial carrier (TC 2.A.29) family. In terms of assembly, homodimer (via N-terminus).

Its subcellular location is the mitochondrion inner membrane. Its function is as follows. Mitochondrial and calcium-binding carrier that catalyzes the calcium-dependent exchange of cytoplasmic glutamate with mitochondrial aspartate across the mitochondrial inner membrane. The sequence is that of Putative calcium-binding mitochondrial carrier F55A11.4 from Caenorhabditis elegans.